The following is a 356-amino-acid chain: L-amino acid-D/L-Glu epimerase (356 aa).

Residues Arg-25, Ser-136, and 161-163 (KVK) contribute to the substrate site. Asp-191 contributes to the Mg(2+) binding site. Residue Asn-193 coordinates substrate. Residues Glu-219 and Asp-244 each coordinate Mg(2+). Residues Lys-268, 296–298 (CMM), and 320–322 (DLD) contribute to the substrate site.

It belongs to the mandelate racemase/muconate lactonizing enzyme family. Mg(2+) is required as a cofactor.

Catalyzes the epimerization of dipeptides with L-Glu in the second position. Has epimerase activity with L-Ala-L-Glu, L-Pro-L-Glu, L-Val-L-Glu, L-Thr-L-Glu and L-Met-L-Glu (in vitro). The protein is L-amino acid-D/L-Glu epimerase of Francisella philomiragia subsp. philomiragia (strain ATCC 25017 / CCUG 19701 / FSC 153 / O#319-036).